The primary structure comprises 205 residues: ATP synthase subunit b (205 aa).

A helical membrane pass occupies residues 51–69 (FAWRCLDFAVLLAIVVWAL).

The protein belongs to the ATPase B chain family. F-type ATPases have 2 components, F(1) - the catalytic core - and F(0) - the membrane proton channel. F(1) has five subunits: alpha(3), beta(3), gamma(1), delta(1), epsilon(1). F(0) has three main subunits: a(1), b(2) and c(10-14). The alpha and beta chains form an alternating ring which encloses part of the gamma chain. F(1) is attached to F(0) by a central stalk formed by the gamma and epsilon chains, while a peripheral stalk is formed by the delta and b chains.

It localises to the cell inner membrane. Its function is as follows. F(1)F(0) ATP synthase produces ATP from ADP in the presence of a proton or sodium gradient. F-type ATPases consist of two structural domains, F(1) containing the extramembraneous catalytic core and F(0) containing the membrane proton channel, linked together by a central stalk and a peripheral stalk. During catalysis, ATP synthesis in the catalytic domain of F(1) is coupled via a rotary mechanism of the central stalk subunits to proton translocation. In terms of biological role, component of the F(0) channel, it forms part of the peripheral stalk, linking F(1) to F(0). In Geotalea uraniireducens (strain Rf4) (Geobacter uraniireducens), this protein is ATP synthase subunit b.